The primary structure comprises 489 residues: Putative ABC transporter ATP-binding protein TDE_0282 (489 aa).

ABC transporter domains follow at residues 2–241 (ITLR…SMKL) and 269–487 (FAVK…MQLE). Residues 36–43 (GASGCGKT) and 301–308 (GENGAGKT) each bind ATP.

It belongs to the ABC transporter superfamily.

It is found in the cell inner membrane. Its function is as follows. Probably part of an ABC transporter complex. Responsible for energy coupling to the transport system. The polypeptide is Putative ABC transporter ATP-binding protein TDE_0282 (Treponema denticola (strain ATCC 35405 / DSM 14222 / CIP 103919 / JCM 8153 / KCTC 15104)).